We begin with the raw amino-acid sequence, 473 residues long: Trehalose-6-phosphate synthase (473 aa).

R10 is a D-glucose 6-phosphate binding site. Residue 21–22 (GG) participates in UDP-alpha-D-glucose binding. D-glucose 6-phosphate contacts are provided by Y76 and D130. 2 residues coordinate UDP-alpha-D-glucose: R262 and K267. R300 contributes to the D-glucose 6-phosphate binding site. Residues F339 and 365 to 369 (LVAKE) contribute to the UDP-alpha-D-glucose site. Residues 454-473 (TPRSPERQQQNNVATFPKLA) form a disordered region.

Belongs to the glycosyltransferase 20 family. In terms of assembly, homotetramer.

The enzyme catalyses D-glucose 6-phosphate + UDP-alpha-D-glucose = alpha,alpha-trehalose 6-phosphate + UDP + H(+). It functions in the pathway glycan biosynthesis; trehalose biosynthesis. Its function is as follows. Probably involved in the osmoprotection via the biosynthesis of trehalose. Catalyzes the transfer of glucose from UDP-alpha-D-glucose (UDP-Glc) to D-glucose 6-phosphate (Glc-6-P) to form trehalose-6-phosphate. Acts with retention of the anomeric configuration of the UDP-sugar donor. The protein is Trehalose-6-phosphate synthase of Salmonella choleraesuis (strain SC-B67).